A 508-amino-acid polypeptide reads, in one-letter code: Photosystem II CP47 reaction center protein (508 aa).

6 consecutive transmembrane segments (helical) span residues 21-36, 101-115, 140-156, 203-218, 237-252, and 457-472; these read AVHIMHTALVSGWAGS, IVFSGLCFLAAIWHW, GIHLFLAGVACFGFGAF, IAAGTLGILAGLFHLS, VLSSSIAAVFFAAFVV, and TFALLFFFGHIWHGAR.

Belongs to the PsbB/PsbC family. PsbB subfamily. In terms of assembly, PSII is composed of 1 copy each of membrane proteins PsbA, PsbB, PsbC, PsbD, PsbE, PsbF, PsbH, PsbI, PsbJ, PsbK, PsbL, PsbM, PsbT, PsbX, PsbY, PsbZ, Psb30/Ycf12, at least 3 peripheral proteins of the oxygen-evolving complex and a large number of cofactors. It forms dimeric complexes. Binds multiple chlorophylls. PSII binds additional chlorophylls, carotenoids and specific lipids. serves as cofactor.

Its subcellular location is the plastid. It is found in the chloroplast thylakoid membrane. Its function is as follows. One of the components of the core complex of photosystem II (PSII). It binds chlorophyll and helps catalyze the primary light-induced photochemical processes of PSII. PSII is a light-driven water:plastoquinone oxidoreductase, using light energy to abstract electrons from H(2)O, generating O(2) and a proton gradient subsequently used for ATP formation. The protein is Photosystem II CP47 reaction center protein of Triticum aestivum (Wheat).